The following is a 282-amino-acid chain: Tyrosine recombinase XerA (282 aa).

One can recognise a Core-binding (CB) domain in the interval 2–79 (EAINEVIEEY…ALRSYFRFEG (78 aa)). The 177-residue stretch at 95 to 271 (SLPKSLTREE…TVEHLRKAQE (177 aa)) folds into the Tyr recombinase domain. Active-site residues include R132, K157, H223, R226, and H249. Y258 serves as the catalytic O-(3'-phospho-DNA)-tyrosine intermediate.

This sequence belongs to the 'phage' integrase family. XerA subfamily.

The protein resides in the cytoplasm. Site-specific tyrosine recombinase, which acts by catalyzing the cutting and rejoining of the recombining DNA molecules. In Thermococcus onnurineus (strain NA1), this protein is Tyrosine recombinase XerA.